The following is a 98-amino-acid chain: NADH-ubiquinone oxidoreductase chain 4L (98 aa).

A run of 3 helical transmembrane segments spans residues 1–21, 29–49, and 61–81; these read MTPTYMNIMLAFTISLLGMLI, SLLCLEGMMMSLFIMTTLIAL, and IILLVFAACEAAVGLALLVSI.

It belongs to the complex I subunit 4L family. As to quaternary structure, core subunit of respiratory chain NADH dehydrogenase (Complex I) which is composed of 45 different subunits.

It is found in the mitochondrion inner membrane. The catalysed reaction is a ubiquinone + NADH + 5 H(+)(in) = a ubiquinol + NAD(+) + 4 H(+)(out). Core subunit of the mitochondrial membrane respiratory chain NADH dehydrogenase (Complex I) which catalyzes electron transfer from NADH through the respiratory chain, using ubiquinone as an electron acceptor. Part of the enzyme membrane arm which is embedded in the lipid bilayer and involved in proton translocation. In Macaca maura (Moor macaque), this protein is NADH-ubiquinone oxidoreductase chain 4L (MT-ND4L).